Here is a 459-residue protein sequence, read N- to C-terminus: uncharacterized protein (459 aa).

Residues 5–63 enclose the TRAM domain; sequence PVEEGQKFPLTIRRMGINGEGIGYFKKAVVFVPGAITGEEVVVEAVKVRDRFTEAKLNK. [4Fe-4S] cluster is bound by residues Cys76, Cys82, Cys85, and Cys166. S-adenosyl-L-methionine contacts are provided by Gln290, Tyr319, Asp340, and Asp388. The active-site Nucleophile is the Cys415.

It belongs to the class I-like SAM-binding methyltransferase superfamily. RNA M5U methyltransferase family.

This is an uncharacterized protein from Listeria monocytogenes serotype 4b (strain F2365).